We begin with the raw amino-acid sequence, 432 residues long: uncharacterized protein (432 aa).

The next 13 membrane-spanning stretches (helical) occupy residues 7 to 27 (FIGLGIITASLIFGSSLPDIY), 29 to 49 (GIVILIVAGCLWFFELLPLPV), 68 to 88 (EALTYFAHPIIFLFLGGFMLA), 124 to 144 (FLSMWISNTSATLILLPIALG), 156 to 176 (FLLLGVAYSASIGGIATIIGS), 196 to 216 (VGFPISLLLFLICTLTLYIYF), 241 to 261 (LVIFVLIASLWIISDYLSEIF), 266 to 286 (FDSVIAIFAIILLFVFNLVEV), 291 to 311 (KIDWGTLILFGGALCLGGVIV), 326 to 346 (ILGNLTPIVLLFLVVTITIIL), 358 to 378 (IIVPILFGVSLGIPKEILILA), 379 to 399 (VGMSASCSFILPVGTPPNAIV), and 412 to 432 (IGMILSILSAAVITLYSILYL).

Belongs to the CitM (TC 2.A.11) transporter family.

The protein resides in the cell membrane. This is an uncharacterized protein from Methanocaldococcus jannaschii (strain ATCC 43067 / DSM 2661 / JAL-1 / JCM 10045 / NBRC 100440) (Methanococcus jannaschii).